The following is a 351-amino-acid chain: MTDRFTRLLGIQQPIIQAPMLGVSTPALAAAVSNAGGLGSIAITGSAAEKGRALIREVRGLTDKPFNVNLFCHRPGQADPARERAWLDYLKPLFAEFGAEPPVRLKNIYLSFLEDPTLLPMLLEERPAAVSFHFGAPPRDQVRALQAVGIRVLVCATTPEEAALVEAAGADAVVAQGIEAGGHRGVFEPERGDAAIGTLALVRLLAARGSLPVVAAGGIMDGRGIRAALELGASAVQMGTAFVLCPESSANAAYREALKGPRAARTALTVTMSGRSARGLPNRMFFDAAAPGVPPLPDYPFVYDATKALQTAALARGNHDFAAQWAGQGAALARELPAAELLRTLVEELRG.

Residues leucine 21, asparagine 69, glutamine 176, glycine 181, glycine 218, and 237 to 240 (QMGT) contribute to the FMN site.

This sequence belongs to the nitronate monooxygenase family. NMO class I subfamily. The cofactor is FMN.

It catalyses the reaction 3 propionate 3-nitronate + 3 O2 + H2O = 3 3-oxopropanoate + 2 nitrate + nitrite + H2O2 + 3 H(+). Functionally, nitronate monooxygenase that uses molecular oxygen to catalyze the oxidative denitrification of alkyl nitronates. The toxin propionate 3-nitronate (P3N) is the best substrate (and the presumed physiological substrate), but this enzyme is also active on other primary and secondary nitronates such as propyl-1-nitronate, ethylnitronate, pentyl-1-nitronate, butyl-1-nitronate and propyl-2-nitronate. Is likely involved in the degradation of P3N, that allows P.aeruginosa PAO1 to grow on 3-nitropropionate/P3N as the sole nitrogen source. Also functions in the detoxification of P3N, a metabolic poison produced by plants and fungi as a defense mechanism. Cannot oxidize nitroalkanes such as 3-nitropropionate, nitroethane, 1-nitropropane, 1-nitrobutane, 1-nitropentane, or 2-nitropropane. The polypeptide is Nitronate monooxygenase (Pseudomonas aeruginosa (strain ATCC 15692 / DSM 22644 / CIP 104116 / JCM 14847 / LMG 12228 / 1C / PRS 101 / PAO1)).